The sequence spans 319 residues: Coproporphyrin III ferrochelatase (319 aa).

Fe(2+) is bound by residues His-193 and Glu-274.

This sequence belongs to the ferrochelatase family.

The protein resides in the cytoplasm. The catalysed reaction is Fe-coproporphyrin III + 2 H(+) = coproporphyrin III + Fe(2+). Its pathway is porphyrin-containing compound metabolism; protoheme biosynthesis. Involved in coproporphyrin-dependent heme b biosynthesis. Catalyzes the insertion of ferrous iron into coproporphyrin III to form Fe-coproporphyrin III. The sequence is that of Coproporphyrin III ferrochelatase from Streptococcus mutans serotype c (strain ATCC 700610 / UA159).